The primary structure comprises 167 residues: Ribosome maturation factor RimM (167 aa).

The 72-residue stretch at glutamate 94–leucine 165 folds into the PRC barrel domain.

Belongs to the RimM family. In terms of assembly, binds ribosomal protein uS19.

It localises to the cytoplasm. Its function is as follows. An accessory protein needed during the final step in the assembly of 30S ribosomal subunit, possibly for assembly of the head region. Essential for efficient processing of 16S rRNA. May be needed both before and after RbfA during the maturation of 16S rRNA. It has affinity for free ribosomal 30S subunits but not for 70S ribosomes. This is Ribosome maturation factor RimM from Staphylococcus aureus (strain bovine RF122 / ET3-1).